A 320-amino-acid polypeptide reads, in one-letter code: Malate dehydrogenase (320 aa).

NAD(+) contacts are provided by residues 10–15 (GAGNIG) and Asp-34. The substrate site is built by Arg-83 and Arg-89. NAD(+) is bound by residues Asn-96 and 119 to 121 (ITN). Substrate-binding residues include Asn-121 and Arg-152. Catalysis depends on His-176, which acts as the Proton acceptor.

The protein belongs to the LDH/MDH superfamily. MDH type 3 family.

It catalyses the reaction (S)-malate + NAD(+) = oxaloacetate + NADH + H(+). Catalyzes the reversible oxidation of malate to oxaloacetate. This Rhizorhabdus wittichii (strain DSM 6014 / CCUG 31198 / JCM 15750 / NBRC 105917 / EY 4224 / RW1) (Sphingomonas wittichii) protein is Malate dehydrogenase.